Consider the following 51-residue polypeptide: Large ribosomal subunit protein bL33 (51 aa).

This sequence belongs to the bacterial ribosomal protein bL33 family.

The polypeptide is Large ribosomal subunit protein bL33 (Acinetobacter baylyi (strain ATCC 33305 / BD413 / ADP1)).